A 347-amino-acid chain; its full sequence is 2-hydroxyacid dehydrogenase A (347 aa).

NAD(+) is bound by residues 157–158 (RI), aspartate 177, 234–236 (TSR), and aspartate 260. Arginine 236 is a catalytic residue. Residue glutamate 265 is part of the active site.

It belongs to the D-isomer specific 2-hydroxyacid dehydrogenase family.

The catalysed reaction is a (2R)-2-hydroxycarboxylate + NADP(+) = a 2-oxocarboxylate + NADPH + H(+). 2-hydroxyacid dehydrogenase that is capable to reduce pyruvate, hydroxypyruvate and glyoxylate in a NADPH- or NADH-dependent manner. In contrast to 2-HadhD/morA, does not recognize 4-methyl-2-oxopentanoate (MOA) as a substrate. The chain is 2-hydroxyacid dehydrogenase A from Aspergillus oryzae (strain ATCC 42149 / RIB 40) (Yellow koji mold).